Reading from the N-terminus, the 331-residue chain is Protein C10 (331 aa).

It belongs to the poxviridae C4/C10 protein family.

The sequence is that of Protein C10 from Vaccinia virus (strain Western Reserve) (VACV).